A 113-amino-acid polypeptide reads, in one-letter code: Cell cycle protein GpsB (113 aa).

The stretch at 36–65 (IKDYETYAALVKSLRQEIADLKEELARKPQ) forms a coiled coil. Residues 61-82 (ARKPQVSSAPSPSHPDPIDVAA) are disordered.

The protein belongs to the GpsB family. In terms of assembly, forms polymers through the coiled coil domains. Interacts with PBP1, MreC and EzrA.

The protein resides in the cytoplasm. Functionally, divisome component that associates with the complex late in its assembly, after the Z-ring is formed, and is dependent on DivIC and PBP2B for its recruitment to the divisome. Together with EzrA, is a key component of the system that regulates PBP1 localization during cell cycle progression. Its main role could be the removal of PBP1 from the cell pole after pole maturation is completed. Also contributes to the recruitment of PBP1 to the division complex. Not essential for septum formation. This Streptococcus pneumoniae (strain Hungary19A-6) protein is Cell cycle protein GpsB.